Here is a 375-residue protein sequence, read N- to C-terminus: tRNA (guanine(26)-N(2))-dimethyltransferase (375 aa).

The Trm1 methyltransferase domain occupies 2 to 368; that stretch reads KYITEGNTKL…AKLIDIVEFI (367 aa). S-adenosyl-L-methionine-binding residues include arginine 35, arginine 66, aspartate 89, aspartate 116, and alanine 117.

The protein belongs to the class I-like SAM-binding methyltransferase superfamily. Trm1 family.

It carries out the reaction guanosine(26) in tRNA + 2 S-adenosyl-L-methionine = N(2)-dimethylguanosine(26) in tRNA + 2 S-adenosyl-L-homocysteine + 2 H(+). Its function is as follows. Dimethylates a single guanine residue at position 26 of a number of tRNAs using S-adenosyl-L-methionine as donor of the methyl groups. The sequence is that of tRNA (guanine(26)-N(2))-dimethyltransferase from Methanococcus aeolicus (strain ATCC BAA-1280 / DSM 17508 / OCM 812 / Nankai-3).